The chain runs to 330 residues: Elongation factor Ts, mitochondrial (330 aa).

The transit peptide at 1–16 directs the protein to the mitochondrion; that stretch reads MYRNCRKAFTFSLRHY.

The protein belongs to the EF-Ts family.

It localises to the mitochondrion. Associates with the EF-Tu.GDP complex and induces the exchange of GDP to GTP. It remains bound to the aminoacyl-tRNA.EF-Tu.GTP complex up to the GTP hydrolysis stage on the ribosome. This Laccaria bicolor (strain S238N-H82 / ATCC MYA-4686) (Bicoloured deceiver) protein is Elongation factor Ts, mitochondrial.